We begin with the raw amino-acid sequence, 448 residues long: N-succinylarginine dihydrolase (448 aa).

Substrate-binding positions include 19 to 28 (AGLSSGNIAS), Asn-110, and 137 to 138 (HR). Glu-174 is a catalytic residue. A substrate-binding site is contributed by Arg-216. Residue His-252 is part of the active site. 2 residues coordinate substrate: Asp-254 and Asn-366. Cys-372 (nucleophile) is an active-site residue.

This sequence belongs to the succinylarginine dihydrolase family. Homodimer.

The catalysed reaction is N(2)-succinyl-L-arginine + 2 H2O + 2 H(+) = N(2)-succinyl-L-ornithine + 2 NH4(+) + CO2. Its pathway is amino-acid degradation; L-arginine degradation via AST pathway; L-glutamate and succinate from L-arginine: step 2/5. Its function is as follows. Catalyzes the hydrolysis of N(2)-succinylarginine into N(2)-succinylornithine, ammonia and CO(2). The polypeptide is N-succinylarginine dihydrolase (Legionella pneumophila (strain Paris)).